Consider the following 187-residue polypeptide: Meiotically up-regulated gene 155 protein (187 aa).

The tract at residues 1 to 24 (MRPTSGCSKDDTIQKQNRRHNTVD) is disordered. The next 2 helical transmembrane spans lie at 83-105 (IISYHFISFHTIVVLLLLPPFSH) and 163-183 (VMLTKPKQFLFLLEFITLFIF).

The protein resides in the cytoplasm. It is found in the nucleus membrane. In terms of biological role, has a role in meiosis. This chain is Meiotically up-regulated gene 155 protein (mug155), found in Schizosaccharomyces pombe (strain 972 / ATCC 24843) (Fission yeast).